Here is a 405-residue protein sequence, read N- to C-terminus: Serpin B12 (405 aa).

Residues 64–83 are disordered; the sequence is SQNESKEPDPCLKSNKQKAG.

This sequence belongs to the serpin family. Ov-serpin subfamily. In terms of assembly, interacts with SLFN12; as part of a pathway regulating cell differentiation. May interact with USP14. Expressed in many tissues, including brain, bone marrow, lymph node, heart, lung, liver, pancreas, testis, ovary, and intestine.

It localises to the cytoplasm. Inhibits trypsin and plasmin, but not thrombin, coagulation factor Xa, or urokinase-type plasminogen activator. May play a role in cell differentiation. The chain is Serpin B12 (SERPINB12) from Homo sapiens (Human).